A 180-amino-acid chain; its full sequence is ATP-dependent protease subunit HslV (180 aa).

Residue Thr-6 is part of the active site. Positions 162, 165, and 168 each coordinate Na(+).

It belongs to the peptidase T1B family. HslV subfamily. As to quaternary structure, a double ring-shaped homohexamer of HslV is capped on each side by a ring-shaped HslU homohexamer. The assembly of the HslU/HslV complex is dependent on binding of ATP.

It is found in the cytoplasm. The enzyme catalyses ATP-dependent cleavage of peptide bonds with broad specificity.. With respect to regulation, allosterically activated by HslU binding. Its function is as follows. Protease subunit of a proteasome-like degradation complex believed to be a general protein degrading machinery. This Oleidesulfovibrio alaskensis (strain ATCC BAA-1058 / DSM 17464 / G20) (Desulfovibrio alaskensis) protein is ATP-dependent protease subunit HslV.